The following is a 363-amino-acid chain: Phosphoserine aminotransferase (363 aa).

An L-glutamate-binding site is contributed by arginine 42. Pyridoxal 5'-phosphate-binding positions include 76-77, tryptophan 102, threonine 156, aspartate 175, and glutamine 198; that span reads GR. At lysine 199 the chain carries N6-(pyridoxal phosphate)lysine. Position 240–241 (240–241) interacts with pyridoxal 5'-phosphate; it reads NT.

The protein belongs to the class-V pyridoxal-phosphate-dependent aminotransferase family. SerC subfamily. Homodimer. Requires pyridoxal 5'-phosphate as cofactor.

Its subcellular location is the cytoplasm. The enzyme catalyses O-phospho-L-serine + 2-oxoglutarate = 3-phosphooxypyruvate + L-glutamate. The catalysed reaction is 4-(phosphooxy)-L-threonine + 2-oxoglutarate = (R)-3-hydroxy-2-oxo-4-phosphooxybutanoate + L-glutamate. It functions in the pathway amino-acid biosynthesis; L-serine biosynthesis; L-serine from 3-phospho-D-glycerate: step 2/3. Its pathway is cofactor biosynthesis; pyridoxine 5'-phosphate biosynthesis; pyridoxine 5'-phosphate from D-erythrose 4-phosphate: step 3/5. Its function is as follows. Catalyzes the reversible conversion of 3-phosphohydroxypyruvate to phosphoserine and of 3-hydroxy-2-oxo-4-phosphonooxybutanoate to phosphohydroxythreonine. The chain is Phosphoserine aminotransferase from Shewanella baltica (strain OS195).